Reading from the N-terminus, the 198-residue chain is 3-isopropylmalate dehydratase small subunit (198 aa).

This sequence belongs to the LeuD family. LeuD type 1 subfamily. As to quaternary structure, heterodimer of LeuC and LeuD.

The catalysed reaction is (2R,3S)-3-isopropylmalate = (2S)-2-isopropylmalate. Its pathway is amino-acid biosynthesis; L-leucine biosynthesis; L-leucine from 3-methyl-2-oxobutanoate: step 2/4. Functionally, catalyzes the isomerization between 2-isopropylmalate and 3-isopropylmalate, via the formation of 2-isopropylmaleate. The protein is 3-isopropylmalate dehydratase small subunit of Mycobacterium leprae (strain Br4923).